Here is a 298-residue protein sequence, read N- to C-terminus: Protein DR_1172 (298 aa).

LEA-like repeat units lie at residues 48 to 117, 128 to 197, and 201 to 270; these read DAAQ…NVGQ, DQAK…DVAQ, and QGAQ…AGKQ. Over residues 174 to 193 the composition is skewed to basic and acidic residues; that stretch reads VQDVKADASKAADQAKDKAQ. Residues 174 to 298 are disordered; it reads VQDVKADASK…MTGNTNTRKN (125 aa). Low complexity predominate over residues 194–208; it reads DVAQNVKQGAQQAAS. Over residues 209 to 233 the composition is skewed to basic and acidic residues; that stretch reads DAKDKVQDVKADASRAADQAKDKAQ. Over residues 275–298 the composition is skewed to low complexity; the sequence is GSTTNNAGTAGNTGMTGNTNTRKN.

It belongs to the LEA type 1 family.

This is Protein DR_1172 from Deinococcus radiodurans (strain ATCC 13939 / DSM 20539 / JCM 16871 / CCUG 27074 / LMG 4051 / NBRC 15346 / NCIMB 9279 / VKM B-1422 / R1).